The primary structure comprises 326 residues: Beta-ketoacyl-[acyl-carrier-protein] synthase III (326 aa).

Residues C112 and H251 contribute to the active site. Residues 252-256 (QANSR) are ACP-binding. The active site involves N281.

The protein belongs to the thiolase-like superfamily. FabH family. As to quaternary structure, homodimer.

It is found in the cytoplasm. It carries out the reaction malonyl-[ACP] + acetyl-CoA + H(+) = 3-oxobutanoyl-[ACP] + CO2 + CoA. The protein operates within lipid metabolism; fatty acid biosynthesis. Catalyzes the condensation reaction of fatty acid synthesis by the addition to an acyl acceptor of two carbons from malonyl-ACP. Catalyzes the first condensation reaction which initiates fatty acid synthesis and may therefore play a role in governing the total rate of fatty acid production. Possesses both acetoacetyl-ACP synthase and acetyl transacylase activities. Its substrate specificity determines the biosynthesis of branched-chain and/or straight-chain of fatty acids. The chain is Beta-ketoacyl-[acyl-carrier-protein] synthase III from Clostridium botulinum (strain 657 / Type Ba4).